The sequence spans 516 residues: tRNA-guanine(15) transglycosylase (516 aa).

The Nucleophile role is filled by aspartate 93. Residues aspartate 128 and alanine 196 each contribute to the substrate site. Positions 279, 281, and 284 each coordinate Zn(2+). Low complexity predominate over residues 488–502 (LSAVSERLGDEASVG). The interval 488–516 (LSAVSERLGDEASVGGDDGDDGGSASSAE) is disordered.

The protein belongs to the archaeosine tRNA-ribosyltransferase family. The cofactor is Zn(2+).

It catalyses the reaction guanosine(15) in tRNA + 7-cyano-7-deazaguanine = 7-cyano-7-carbaguanosine(15) in tRNA + guanine. It functions in the pathway tRNA modification; archaeosine-tRNA biosynthesis. In terms of biological role, exchanges the guanine residue with 7-cyano-7-deazaguanine (preQ0) at position 15 in the dihydrouridine loop (D-loop) of archaeal tRNAs. This Haloferax volcanii (strain ATCC 29605 / DSM 3757 / JCM 8879 / NBRC 14742 / NCIMB 2012 / VKM B-1768 / DS2) (Halobacterium volcanii) protein is tRNA-guanine(15) transglycosylase.